Reading from the N-terminus, the 276-residue chain is MKPMKTSWADEVEADYVDGLPPSKEYTQGNLKFVAEYKYNEDGKKVKVVRTYKIQKQTVPKVVARRRNWSKFGDSLLDKPGPCSQTTMVAEEVHMVFISSKELEQAQAQEPQVEPGKNIARCRICNGEHWSVNCPYKGTSMDSKTLMESKATAAAAAAVSDASKTGKYVSPFLKEGGCAIGGGIGIGAKPWVRERSAVRISNLSESMTEADLEELVKKIGPHTKLYLAREKNTGLCKGFAYVHFKFRQDAAAAIEILNGHGYDHLILCVEWSKPQP.

Residues 196 to 274 (SAVRISNLSE…LILCVEWSKP (79 aa)) enclose the RRM domain.

This sequence belongs to the eIF-3 subunit G family. As to quaternary structure, component of the eukaryotic translation initiation factor 3 (eIF-3) complex. The eIF-3 complex interacts with pix.

The protein resides in the cytoplasm. Its function is as follows. RNA-binding component of the eukaryotic translation initiation factor 3 (eIF-3) complex, which is involved in protein synthesis of a specialized repertoire of mRNAs and, together with other initiation factors, stimulates binding of mRNA and methionyl-tRNAi to the 40S ribosome. The eIF-3 complex specifically targets and initiates translation of a subset of mRNAs involved in cell proliferation. This subunit can bind 18S rRNA. The chain is Eukaryotic translation initiation factor 3 subunit G-2 from Drosophila persimilis (Fruit fly).